We begin with the raw amino-acid sequence, 83 residues long: Small ribosomal subunit protein eS27 (83 aa).

The C4-type zinc finger occupies 37 to 59; it reads CPGCFNITTVFSHAQTVVICGSC.

This sequence belongs to the eukaryotic ribosomal protein eS27 family. As to quaternary structure, component of the small ribosomal subunit (SSU). Mature yeast ribosomes consist of a small (40S) and a large (60S) subunit. The 40S small subunit contains 1 molecule of ribosomal RNA (18S rRNA) and at least 33 different proteins. The large 60S subunit contains 3 rRNA molecules (25S, 5.8S and 5S rRNA) and at least 46 different proteins. It depends on Zn(2+) as a cofactor.

It localises to the cytoplasm. Component of the ribosome, a large ribonucleoprotein complex responsible for the synthesis of proteins in the cell. The small ribosomal subunit (SSU) binds messenger RNAs (mRNAs) and translates the encoded message by selecting cognate aminoacyl-transfer RNA (tRNA) molecules. The large subunit (LSU) contains the ribosomal catalytic site termed the peptidyl transferase center (PTC), which catalyzes the formation of peptide bonds, thereby polymerizing the amino acids delivered by tRNAs into a polypeptide chain. The nascent polypeptides leave the ribosome through a tunnel in the LSU and interact with protein factors that function in enzymatic processing, targeting, and the membrane insertion of nascent chains at the exit of the ribosomal tunnel. The polypeptide is Small ribosomal subunit protein eS27 (rps27) (Schizosaccharomyces pombe (strain 972 / ATCC 24843) (Fission yeast)).